The sequence spans 354 residues: Probable L-ascorbate-6-phosphate lactonase UlaG (354 aa).

The protein belongs to the UlaG family. A divalent metal cation serves as cofactor.

It is found in the cytoplasm. It catalyses the reaction L-ascorbate 6-phosphate + H2O = 3-dehydro-L-gulonate 6-phosphate. It functions in the pathway cofactor degradation; L-ascorbate degradation; D-xylulose 5-phosphate from L-ascorbate: step 1/4. Probably catalyzes the hydrolysis of L-ascorbate-6-P into 3-keto-L-gulonate-6-P. Is essential for L-ascorbate utilization under anaerobic conditions. In Escherichia fergusonii (strain ATCC 35469 / DSM 13698 / CCUG 18766 / IAM 14443 / JCM 21226 / LMG 7866 / NBRC 102419 / NCTC 12128 / CDC 0568-73), this protein is Probable L-ascorbate-6-phosphate lactonase UlaG.